We begin with the raw amino-acid sequence, 931 residues long: Scaffold attachment factor B1 (931 aa).

The segment covering 1 to 24 has biased composition (low complexity); sequence MAETLSGLGDSGAASAAAVSSAAS. The segment at 1-35 is disordered; it reads MAETLSGLGDSGAASAAAVSSAASETGTRRLSDLR. A2 carries the post-translational modification N-acetylalanine. Phosphoserine occurs at positions 24 and 55. The region spanning 31-65 is the SAP domain; the sequence is LSDLRVIDLRAELRKRNLTSSGNKSVLMERLKKAI. The interval 64 to 121 is disordered; that stretch reads AIEEEGGNPDEIEVISEGNKKMPKRPSKGKKPEDEGVEDNGLEENSGDGQEDVETSLE. The segment covering 67 to 77 has biased composition (acidic residues); the sequence is EEGGNPDEIEV. Position 79 is a phosphoserine (S79). Residues 98 to 118 are compositionally biased toward acidic residues; it reads EGVEDNGLEENSGDGQEDVET. Residues K171 and K185 each participate in a glycyl lysine isopeptide (Lys-Gly) (interchain with G-Cter in SUMO2) cross-link. A phosphoserine mark is found at S194, S196, and S208. Disordered regions lie at residues 205–304 and 316–430; these read EEAS…TRCQ and KREP…GRNF. Residues 224–233 are compositionally biased toward basic and acidic residues; sequence CKSEPVKEEG. Residue K230 forms a Glycyl lysine isopeptide (Lys-Gly) (interchain with G-Cter in SUMO) linkage. Residues 267–287 show a composition bias toward acidic residues; sequence EEEEEEEEEEEQEEEQEEEGD. K316 participates in a covalent cross-link: Glycyl lysine isopeptide (Lys-Gly) (interchain with G-Cter in SUMO). Residues 341–356 show a composition bias toward polar residues; the sequence is EQSSTAAQLPETTSQE. The segment covering 368–380 has biased composition (basic and acidic residues); it reads EPRDSKDDVKKFA. K403 is covalently cross-linked (Glycyl lysine isopeptide (Lys-Gly) (interchain with G-Cter in SUMO2)). S405 and S406 each carry phosphoserine. Basic and acidic residues predominate over residues 412 to 423; sequence DTKRLSREEKGR. K414 is covalently cross-linked (Glycyl lysine isopeptide (Lys-Gly) (interchain with G-Cter in SUMO2)). The region spanning 428–506 is the RRM domain; sequence RNFWVSGLSS…KMISVEKAKS (79 aa). S437 is subject to Phosphoserine. Composition is skewed to basic and acidic residues over residues 500 to 573 and 581 to 592; these read SVEK…ERSR and GTERTVVMDKSK. Disordered stretches follow at residues 500-663, 691-720, 759-843, and 872-931; these read SVEK…WERE, RLERERMHVEQERRREQERIHREREELRRQ, RYHS…PRRD, and RWQG…QQTQ. Glycyl lysine isopeptide (Lys-Gly) (interchain with G-Cter in SUMO2) cross-links involve residues K505, K536, K565, and K592. The interval 550–816 is interaction with POLR2A; SFRS1; SFRS9 and SFRS10; that stretch reads TDDGSTEKSK…RHGGPERHGR (267 aa). K600 participates in a covalent cross-link: Glycyl lysine isopeptide (Lys-Gly) (interchain with G-Cter in SUMO1); alternate. K600 is covalently cross-linked (Glycyl lysine isopeptide (Lys-Gly) (interchain with G-Cter in SUMO2); alternate). Phosphoserine is present on residues S602, S604, S623, and S626. The segment covering 603 to 663 has biased composition (basic and acidic residues); it reads GSKERASKSQ…QRLQAQWERE (61 aa). Positions 621–638 match the Nuclear localization signal motif; it reads KRSVVSFDKVKESRKSRD. Residue K629 is modified to N6-acetyllysine. A compositionally biased stretch (basic and acidic residues) spans 759 to 820; it reads RYHSDFSRQD…PERHGRDSRD (62 aa). R834 carries the omega-N-methylarginine modification. Asymmetric dimethylarginine occurs at positions 892, 898, 908, and 914.

As to quaternary structure, monomer and homodimer. Interacts with KHDRBS3. Interacts with CLK2. Interacts with POLR2A, ASF/SRSF1, SRp30c/SRFS9 and TRA2B/SFRS10. Interacts with SRPK1 and inhibits its activity. Interacts with RBMX. Interacts with FUS. Interacts with ZBED4. Phosphorylated by CDC-like kinase 2 (CLK2). In terms of processing, sumoylated by PIAS1 with SUMO1 and SUMO2/3, desumoylated by SENP1. Sumoylation is required for transcriptional repressor activity.

It is found in the nucleus. In terms of biological role, binds to scaffold/matrix attachment region (S/MAR) DNA and forms a molecular assembly point to allow the formation of a 'transcriptosomal' complex (consisting of SR proteins and RNA polymerase II) coupling transcription and RNA processing. Functions as an estrogen receptor corepressor and can also bind to the HSP27 promoter and decrease its transcription. Thereby acts as a negative regulator of cell proliferation. When associated with RBMX, binds to and stimulates transcription from the SREBF1 promoter. The chain is Scaffold attachment factor B1 (Safb) from Rattus norvegicus (Rat).